Consider the following 680-residue polypeptide: Putative E3 ubiquitin-protein ligase UNKL (680 aa).

A disordered region spans residues 1-22 (MPSVSKAAAAALSGSPPQTEKP). 4 consecutive C3H1-type zinc fingers follow at residues 75–104 (YSPDVYCSKYNEATGVCPDGDECPYLHRTT), 115–145 (YYKTGTCIHETDARGHCVKNGLHCAFAHGPL), 243–277 (QYRSTPCPSVKHGDEWGEPSRCDGGDGCQYCHSRT), and 283–310 (PESTKCNDMRQTGYCPRGPFCAFAHVEK). 4 stretches are compositionally biased toward low complexity: residues 326–337 (TSPSSTGSGQPG), 375–396 (VSSSVASSLASSAGSGSSSPTA), 465–497 (SLPRAPSLHSPSSASTSPLGSLSQPLPGPVGSS), and 545–562 (SPSPILSAGPPSSSSASP). Disordered stretches follow at residues 326 to 358 (TSPSSTGSGQPGNAKRRDSPAEGGPRGSEQDSK), 375 to 400 (VSSSVASSLASSAGSGSSSPTALPAP), 442 to 520 (DGHD…SAAS), and 545 to 566 (SPSPILSAGPPSSSSASPNGAE). The stretch at 563–619 (NGAELARVRRQLDEAKRKIRQWEESWQQVKQVCDAWQREAQEAKERARVADSDRQLA) forms a coiled coil. The segment at 639–674 (CVACRERAHGAVLRPCQHHILCEPCAATAPECPYCK) adopts an RING-type zinc-finger fold.

This sequence belongs to the unkempt family. As to quaternary structure, isoform 4 (C-terminal) interacts with the GTP-bound form of RAC1. Isoform 4 (C-terminal) interacts with SMARCD2/BAF60b. Isoform 4 is ubiquitinated in the C-terminal. Ubiquitination is enhanced by activated RAC1. The presence of the RING finger domain is not essential for ubiquitination to occur.

The protein resides in the cytoplasm. It is found in the nucleus. The protein operates within protein modification; protein ubiquitination. Its function is as follows. May participate in a protein complex showing an E3 ligase activity regulated by RAC1. Ubiquitination is directed towards itself and possibly other substrates, such as SMARCD2/BAF60b. Intrinsic E3 ligase activity has not been proven. This chain is Putative E3 ubiquitin-protein ligase UNKL (UNKL), found in Homo sapiens (Human).